Here is a 428-residue protein sequence, read N- to C-terminus: MKKITAAKKGLKGQVTVPGDKSISHRALILGALAEGITEIENFLVAQDTLATLNCLEKYGVRIERRDTFVRVFGTAQNFSEPQDVLDAQNSGTTLRLLSGVAATFPFVSVFTGDASLRRRPMKRVLEPLTQMGARVLARGQGDYAPFAIKGGKLRGQDFILKKASAQVKSALLLAGLRAEGNTSVTEPQLSRDHTERMLVGFGAKIKREGLRVEISGGQKLLGQKVIVPGDFSTASFFIVAALIVPDSHLIIKNVGLNPTRTGLLTVLKEMGANIQILNFHENSGEPVGDLEVKYSPLKAVEVPPEIVPAMIDEFPILAVAMALAYGESKVRGAEELRVKESDRIKSIVSEFSKMGVAVKELPDGFIISGGNKILGTTVDSHHDHRIAMSLAVLGLTAAGTTEILNADAVAISYPEFFQQLTKLTEGA.

3 residues coordinate 3-phosphoshikimate: K21, S22, and R26. K21 contacts phosphoenolpyruvate. Positions 92 and 120 each coordinate phosphoenolpyruvate. Residues S165, Q167, D313, and K340 each contribute to the 3-phosphoshikimate site. A phosphoenolpyruvate-binding site is contributed by Q167. The active-site Proton acceptor is D313. Residues R344 and R386 each contribute to the phosphoenolpyruvate site.

It belongs to the EPSP synthase family. Monomer.

The protein resides in the cytoplasm. It carries out the reaction 3-phosphoshikimate + phosphoenolpyruvate = 5-O-(1-carboxyvinyl)-3-phosphoshikimate + phosphate. It functions in the pathway metabolic intermediate biosynthesis; chorismate biosynthesis; chorismate from D-erythrose 4-phosphate and phosphoenolpyruvate: step 6/7. In terms of biological role, catalyzes the transfer of the enolpyruvyl moiety of phosphoenolpyruvate (PEP) to the 5-hydroxyl of shikimate-3-phosphate (S3P) to produce enolpyruvyl shikimate-3-phosphate and inorganic phosphate. This is 3-phosphoshikimate 1-carboxyvinyltransferase from Carboxydothermus hydrogenoformans (strain ATCC BAA-161 / DSM 6008 / Z-2901).